The primary structure comprises 1372 residues: Collagen alpha-2(I) chain (1372 aa).

The first 22 residues, 1–22 (MLSFVDTRTLLLLAVTSCLATC), serve as a signal peptide directing secretion. Gln23 is subject to Pyrrolidone carboxylic acid. Residues 23 to 85 (QSLQMGSVRK…PPGLTGNFAA (63 aa)) constitute a propeptide, N-terminal propeptide. Residues 28 to 1135 (GSVRKGPTGD…DQPRSQPSLR (1108 aa)) form a disordered region. The span at 59–77 (VGPPGPPGAPGPPGPPGPP) shows a compositional bias: pro residues. Pyrrolidone carboxylic acid is present on Gln86. Lys90 carries the post-translational modification Allysine. Over residues 95–146 (GPGPMGLMGPRGPPGAVGAPGPQGFQGPAGEPGEPGQTGPAGSRGPAGPPGK) the composition is skewed to low complexity. Residues 147–161 (AGEDGHPGKPGRPGE) show a composition bias toward basic and acidic residues. Lys183 is modified (5-hydroxylysine; alternate). Residue Lys183 is glycosylated (O-linked (Gal...) hydroxylysine; alternate). 7 stretches are compositionally biased toward low complexity: residues 231–260 (VGAPGPAGARGSDGSVGPVGPAGPIGSAGP), 285–299 (AGPRGEAGLPGLSGP), 306–327 (PGANGLTGAKGATGLPGVAGAP), 336–348 (PGPVGAAGATGPR), 390–416 (PGEPGSAGPAGPPGLRGSPGSRGLPGA), 476–495 (LPGIDGRPGPIGPAGPRGEA), and 519–537 (PGLAGARGAPGPDGNNGAQ). Positions 544 to 553 (GVQGGKGEQG) are enriched in gly residues. Over residues 600 to 639 (PGESGAAGPSGPIGIRGPSGAPGPDGNKGEAGAVGAPGSA) the composition is skewed to low complexity. A compositionally biased stretch (gly residues) spans 640–649 (GASGPGGLPG). Low complexity-rich tracts occupy residues 674-716 (NPGR…PRGS) and 725-743 (PAGPNGFAGPAGSAGQPGA). Residues 744–753 (KGEKGTKGPK) show a composition bias toward basic and acidic residues. Low complexity predominate over residues 755–771 (ENGIVGPTGPVGAAGPS). Residues 781-790 (GSRGDGGPPG) show a composition bias toward gly residues. The Cell attachment site signature appears at 783 to 785 (RGD). Residues 792–801 (TGFPGAAGRT) are compositionally biased toward low complexity. The Cell attachment site signature appears at 828 to 830 (RGD). 4 stretches are compositionally biased toward low complexity: residues 855 to 882 (SGEPGTTGPPGTAGPQGLLGAPGILGLP), 891 to 927 (PGIAGALGEPGPLGIAGPPGARGPPGAVGSPGVNGAP), 957 to 978 (PGNIGPTGAAGAPGPHGSVGPA), and 987 to 1007 (PGPAGSVGPVGAVGPRGPSGP). The Cell attachment site motif lies at 1011–1013 (RGD). The span at 1011–1022 (RGDKGEPGDKGA) shows a compositional bias: basic and acidic residues. Positions 1095 to 1107 (AGPPGPPGPPGPP) are enriched in pro residues. Over residues 1108–1120 (GVSGGGYDFGFEG) the composition is skewed to gly residues. Residues 1126 to 1372 (DQPRSQPSLR…RVEVGPVCFK (247 aa)) constitute a propeptide, C-terminal propeptide. In terms of domain architecture, Fibrillar collagen NC1 spans 1139 to 1372 (YEVDATLKSL…RVEVGPVCFK (234 aa)). 3 cysteine pairs are disulfide-bonded: Cys1169-Cys1201, Cys1209-Cys1370, and Cys1278-Cys1323. Ca(2+) contacts are provided by Asp1187, Asn1189, Gln1190, Cys1192, and Asp1195. N-linked (GlcNAc...) asparagine glycosylation occurs at Asn1273.

It belongs to the fibrillar collagen family. In terms of assembly, trimers of one alpha 2(I) and two alpha 1(I) chains. Interacts (via C-terminus) with TMEM131 (via PapD-L domain); the interaction is direct and is involved in assembly and TRAPPIII ER-to-Golgi transport complex-dependent secretion of collagen. Post-translationally, proline residues at the third position of the tripeptide repeating unit (G-X-P) are hydroxylated in some or all of the chains. Proline residues at the second position of the tripeptide repeating unit (G-P-X) are hydroxylated in some of the chains. Forms the fibrils of tendon, ligaments and bones. In bones the fibrils are mineralized with calcium hydroxyapatite. Expressed in flagella of epididymal sperm.

It localises to the secreted. Its subcellular location is the extracellular space. The protein localises to the extracellular matrix. In terms of biological role, type I collagen is a member of group I collagen (fibrillar forming collagen). The protein is Collagen alpha-2(I) chain (Col1a2) of Rattus norvegicus (Rat).